A 326-amino-acid chain; its full sequence is UPF0324 membrane protein PBPRB0970 (326 aa).

A run of 10 helical transmembrane segments spans residues 27–49 (FFII…ILGF), 70–89 (LLAY…QAIA), 94–116 (GFGL…TKAL), 123–145 (GHLI…APAI), 155–177 (ALAT…GHLL), 184–206 (FGTW…GAYG), 216–235 (IKLA…ALLF), 242–261 (IGIP…AHFV), 271–290 (IFVA…GSGI), and 303–325 (LLLG…LLNV).

It belongs to the UPF0324 family.

It is found in the cell membrane. This chain is UPF0324 membrane protein PBPRB0970, found in Photobacterium profundum (strain SS9).